The primary structure comprises 619 residues: Mitogen-activated protein kinase kinase kinase 2 (619 aa).

The tract at residues 25-45 is disordered; that stretch reads LSLQETRKAKSSSPKKQNDVR. S26 is subject to Phosphoserine. The region spanning 43-122 is the PB1 domain; it reads DVRVKFEHRG…KSLKILLVIN (80 aa). A phosphoserine mark is found at S153, S159, and S164. 3 disordered regions span residues 154–173, 201–248, and 289–355; these read IIGP…IPDE, LDPL…QEFS, and RTQG…APTN. Residues 203–219 are compositionally biased toward low complexity; it reads PLSLSSPENSGSGSCPS. S239, S297, S311, S331, S344, and S349 each carry phosphoserine. Polar residues predominate over residues 290-299; sequence TQGTSLRSPV. Low complexity predominate over residues 300–315; the sequence is SFSPTDHSLSTSSGSS. Residues 322–332 are compositionally biased toward basic and acidic residues; it reads DDSRIRRRGSD. The Protein kinase domain maps to 357-617; it reads RLGKLLGQGA…DELLRHMFVH (261 aa). Residues 362 to 371 and K385 contribute to the ATP site; that span reads LGQGAFGRVY. The active-site Proton acceptor is D483.

It belongs to the protein kinase superfamily. STE Ser/Thr protein kinase family. MAP kinase kinase kinase subfamily. In terms of assembly, interacts with PKN2; the interaction activates PKN2 kinase activity in a MAP3K2-independent kinase activity. Self-associates. Binds both upstream activators and downstream substrates in multimolecular complexes. Interacts (via the kinase catalytic domain) with STK38. Interacts with XIAP/BIRC4. Mg(2+) is required as a cofactor. In terms of processing, autophosphorylated. Ubiquitination by XIAP/BIRC4 does not lead to proteasomal degradation.

It localises to the cytoplasm. Its subcellular location is the nucleus. It carries out the reaction L-seryl-[protein] + ATP = O-phospho-L-seryl-[protein] + ADP + H(+). The enzyme catalyses L-threonyl-[protein] + ATP = O-phospho-L-threonyl-[protein] + ADP + H(+). Its activity is regulated as follows. Activated by phosphorylation on Thr-524. Its function is as follows. Component of a protein kinase signal transduction cascade. Regulates the JNK and ERK5 pathways by phosphorylating and activating MAP2K5 and MAP2K7. Plays a role in caveolae kiss-and-run dynamics. The sequence is that of Mitogen-activated protein kinase kinase kinase 2 (MAP3K2) from Homo sapiens (Human).